Consider the following 577-residue polypeptide: (E)-beta-farnesene synthase (577 aa).

Residues D327, D331, D474, S478, and E482 each coordinate Mg(2+). A DDXXD motif motif is present at residues D327–D331.

It belongs to the terpene synthase family. Mg(2+) is required as a cofactor. The cofactor is Co(2+). It depends on Mn(2+) as a cofactor. In terms of tissue distribution, expressed in flowers.

It localises to the cytoplasm. It catalyses the reaction (2E,6E)-farnesyl diphosphate = (E)-beta-farnesene + diphosphate. It participates in secondary metabolite biosynthesis; terpenoid biosynthesis. Its activity is regulated as follows. Strongly inhibited by manganese at concentration higher than 20 uM. Sesquiterpene cyclase catalyzing the production of beta-farnesene from farnesyl diphosphate. Unable to use geranyl diphosphate as substrate. In Artemisia annua (Sweet wormwood), this protein is (E)-beta-farnesene synthase (CASC125).